An 81-amino-acid chain; its full sequence is Sulfur carrier protein TusA (81 aa).

The active-site Cysteine persulfide intermediate is the C19.

The protein belongs to the sulfur carrier protein TusA family. As to quaternary structure, interacts with IscS.

It is found in the cytoplasm. It participates in tRNA modification. Functionally, sulfur carrier protein involved in sulfur trafficking in the cell. Part of a sulfur-relay system required for 2-thiolation during synthesis of 2-thiouridine of the modified wobble base 5-methylaminomethyl-2-thiouridine (mnm(5)s(2)U) in tRNA. Interacts with IscS and stimulates its cysteine desulfurase activity. Accepts an activated sulfur from IscS, which is then transferred to TusD, and thus determines the direction of sulfur flow from IscS to 2-thiouridine formation. Also appears to be involved in sulfur transfer for the biosynthesis of molybdopterin. This Pectobacterium atrosepticum (strain SCRI 1043 / ATCC BAA-672) (Erwinia carotovora subsp. atroseptica) protein is Sulfur carrier protein TusA.